The chain runs to 161 residues: Large ribosomal subunit protein bL21m (161 aa).

Residues 1–35 (MLQLKFIWPVARITPIYRPFTSHPFRNLATSSSIS) constitute a mitochondrion transit peptide.

It belongs to the bacterial ribosomal protein bL21 family. As to quaternary structure, component of the mitochondrial large ribosomal subunit (mt-LSU). Mature yeast 74S mitochondrial ribosomes consist of a small (37S) and a large (54S) subunit. The 37S small subunit contains a 15S ribosomal RNA (15S mt-rRNA) and 34 different proteins. The 54S large subunit contains a 21S rRNA (21S mt-rRNA) and 46 different proteins.

The protein resides in the mitochondrion. In terms of biological role, component of the mitochondrial ribosome (mitoribosome), a dedicated translation machinery responsible for the synthesis of mitochondrial genome-encoded proteins, including at least some of the essential transmembrane subunits of the mitochondrial respiratory chain. The mitoribosomes are attached to the mitochondrial inner membrane and translation products are cotranslationally integrated into the membrane. In Saccharomyces cerevisiae (strain ATCC 204508 / S288c) (Baker's yeast), this protein is Large ribosomal subunit protein bL21m (MRPL49).